An 878-amino-acid polypeptide reads, in one-letter code: MTDMYASLRSNVGTLGQILGDTIRTHMDEPFLDKIEQIRHLAKSSRQGNDTAREQMLTLLAALPDEELVPFAKAFNQFLNLANIAEQFHTISRNCDELVCVPDPVDQLLGRMLNGRIDQDKMLECLQTLDIDLVLTAHPTEISRRTLIQKYSAVVDCLATMENPQLTEREKKQNHLRLRQLIAQIWHTNEIRHERPTPVDEARWGLSTIEASLWQAIPDFLRQLNEQVEERTGKQLPSDIAPIRFSSWMGGDRDGNPFVTAKVTQEVLDRNRHTAARLYLKDVVLLVNELSMEEANEELLALTDNSHEPYRVVLRELRQKLRDTIDYLNARLEGHSPEVDLDSLIWHEDDLKQPLTLLYRSLTESGMSLIANGLLLDMLRRLACFGIHMLRLDIRQDAQRHSDVIAELTRYLGLGDFDHWDEHEKQAFLLRELSGKRPLIPHNWEPSAEVAEVISTVRLIASQSPKALGSYVISMASQPSDVLTVLLLLKEAGCQHPMRVVPLFETLEDLNNAASCISALFAIDWYRGYCKGSQEVMIGYSDSAKDAGVMAAAWAQYSAQEKLVKVCNQADIKLTLFHGRGGTIGRGGGPAHKAILSQPPGSVDGRIRVTEQGEMIRFKFGLPKLAVQSLALYTSAVMEATLLPPPEPKPEWREAMERLASDSVTAYRAIVREEPDFVAYFRAATPEVELGKLPLGSRPAKRRVDGGIESLRAIPWIFAWSQNRLMLPAWLGAGEALQQAADRGELTLLREMEQQWPFFETRISMLEMVYAKAEPNLAKYYETCLVPQELHHLGEALRSRMATGIKVVLELTQSDALMSHTPWNRESVELRNPYIDPLNFLQAELLARTRKEQAGSSNVELALMLTIAGVAAGMRNTG.

Active-site residues include histidine 138 and lysine 545.

This sequence belongs to the PEPCase type 1 family. Requires Mg(2+) as cofactor.

It carries out the reaction oxaloacetate + phosphate = phosphoenolpyruvate + hydrogencarbonate. Its function is as follows. Forms oxaloacetate, a four-carbon dicarboxylic acid source for the tricarboxylic acid cycle. This Shewanella loihica (strain ATCC BAA-1088 / PV-4) protein is Phosphoenolpyruvate carboxylase.